The primary structure comprises 346 residues: Tryptophan--tRNA ligase (346 aa).

ATP contacts are provided by residues 10–12 and 18–19; these read QAS and GN. The short motif at 11–19 is the 'HIGH' region element; sequence ASGKQHLGN. Asp-140 contacts L-tryptophan. ATP is bound by residues 152 to 154, Ile-191, and 200 to 204; these read GND and KMSKS. The 'KMSKS' region motif lies at 200–204; it reads KMSKS.

The protein belongs to the class-I aminoacyl-tRNA synthetase family. As to quaternary structure, homodimer.

The protein resides in the cytoplasm. It catalyses the reaction tRNA(Trp) + L-tryptophan + ATP = L-tryptophyl-tRNA(Trp) + AMP + diphosphate + H(+). Its function is as follows. Catalyzes the attachment of tryptophan to tRNA(Trp). The protein is Tryptophan--tRNA ligase of Mycoplasma pneumoniae (strain ATCC 29342 / M129 / Subtype 1) (Mycoplasmoides pneumoniae).